A 181-amino-acid chain; its full sequence is Large ribosomal subunit protein uL5 (181 aa).

The protein belongs to the universal ribosomal protein uL5 family. In terms of assembly, part of the 50S ribosomal subunit; contacts the 5S rRNA and probably tRNA. Forms a bridge to the 30S subunit in the 70S ribosome.

In terms of biological role, this is one of the proteins that bind and probably mediate the attachment of the 5S RNA into the large ribosomal subunit, where it forms part of the central protuberance. In the 70S ribosome it contacts protein S13 of the 30S subunit (bridge B1b), connecting the 2 subunits; this bridge is implicated in subunit movement. May contact the P site tRNA; the 5S rRNA and some of its associated proteins might help stabilize positioning of ribosome-bound tRNAs. This Methanococcus maripaludis (strain DSM 14266 / JCM 13030 / NBRC 101832 / S2 / LL) protein is Large ribosomal subunit protein uL5.